A 546-amino-acid polypeptide reads, in one-letter code: CTP synthase (546 aa).

The amidoligase domain stretch occupies residues 1-266 (MTTNYIFVTG…DELVCKRFGI (266 aa)). Ser-14 is a binding site for CTP. UTP is bound at residue Ser-14. Residues 15-20 (SLGKGI) and Asp-72 each bind ATP. Asp-72 and Glu-140 together coordinate Mg(2+). Residues 147–149 (DIE), 187–192 (KTKPTQ), and Lys-223 each bind CTP. UTP contacts are provided by residues 187–192 (KTKPTQ) and Lys-223. Residue 239–241 (RDV) participates in ATP binding. A Glutamine amidotransferase type-1 domain is found at 291 to 542 (TIGMVGKYIE…VKAAGEFQRG (252 aa)). Residue Gly-352 participates in L-glutamine binding. Cys-379 (nucleophile; for glutamine hydrolysis) is an active-site residue. Residues 380–383 (LGMQ), Glu-403, and Arg-470 contribute to the L-glutamine site. Residues His-515 and Glu-517 contribute to the active site.

This sequence belongs to the CTP synthase family. Homotetramer.

It carries out the reaction UTP + L-glutamine + ATP + H2O = CTP + L-glutamate + ADP + phosphate + 2 H(+). The catalysed reaction is L-glutamine + H2O = L-glutamate + NH4(+). The enzyme catalyses UTP + NH4(+) + ATP = CTP + ADP + phosphate + 2 H(+). The protein operates within pyrimidine metabolism; CTP biosynthesis via de novo pathway; CTP from UDP: step 2/2. Allosterically activated by GTP, when glutamine is the substrate; GTP has no effect on the reaction when ammonia is the substrate. The allosteric effector GTP functions by stabilizing the protein conformation that binds the tetrahedral intermediate(s) formed during glutamine hydrolysis. Inhibited by the product CTP, via allosteric rather than competitive inhibition. Its function is as follows. Catalyzes the ATP-dependent amination of UTP to CTP with either L-glutamine or ammonia as the source of nitrogen. Regulates intracellular CTP levels through interactions with the four ribonucleotide triphosphates. The sequence is that of CTP synthase from Vibrio atlanticus (strain LGP32) (Vibrio splendidus (strain Mel32)).